The following is a 218-amino-acid chain: ATP-dependent dethiobiotin synthetase BioD (218 aa).

Position 10 to 15 (Asn-10 to Thr-15) interacts with ATP. Mg(2+) is bound at residue Thr-14. Lys-35 is a catalytic residue. Thr-39 provides a ligand contact to substrate. Mg(2+)-binding residues include His-52 and Glu-116. Residues Glu-116–Gly-119 and Leu-176–Arg-177 contribute to the ATP site.

It belongs to the dethiobiotin synthetase family. As to quaternary structure, homodimer. It depends on Mg(2+) as a cofactor.

It is found in the cytoplasm. The enzyme catalyses (7R,8S)-7,8-diammoniononanoate + CO2 + ATP = (4R,5S)-dethiobiotin + ADP + phosphate + 3 H(+). It participates in cofactor biosynthesis; biotin biosynthesis; biotin from 7,8-diaminononanoate: step 1/2. Functionally, catalyzes a mechanistically unusual reaction, the ATP-dependent insertion of CO2 between the N7 and N8 nitrogen atoms of 7,8-diaminopelargonic acid (DAPA, also called 7,8-diammoniononanoate) to form a ureido ring. The chain is ATP-dependent dethiobiotin synthetase BioD from Helicobacter pylori (strain Shi470).